The chain runs to 89 residues: Translation initiation factor IF-1, chloroplastic (89 aa).

The S1-like domain occupies 1 to 73; the sequence is MKEKEAKWVV…TKGRIIYRLP (73 aa).

The protein belongs to the IF-1 family. As to quaternary structure, component of the 30S ribosomal translation pre-initiation complex which assembles on the 30S ribosome in the order IF-2 and IF-3, IF-1 and N-formylmethionyl-tRNA(fMet); mRNA recruitment can occur at any time during PIC assembly.

The protein resides in the plastid. It localises to the chloroplast. One of the essential components for the initiation of protein synthesis. Stabilizes the binding of IF-2 and IF-3 on the 30S subunit to which N-formylmethionyl-tRNA(fMet) subsequently binds. Helps modulate mRNA selection, yielding the 30S pre-initiation complex (PIC). Upon addition of the 50S ribosomal subunit IF-1, IF-2 and IF-3 are released leaving the mature 70S translation initiation complex. This is Translation initiation factor IF-1, chloroplastic from Jasminum nudiflorum (Winter jasmine).